A 196-amino-acid polypeptide reads, in one-letter code: Carnitine operon protein CaiE (196 aa).

The disordered stretch occupies residues 173 to 196 (TQPLRQMEENRPRLQGTTDVTPKR). The span at 187–196 (QGTTDVTPKR) shows a compositional bias: polar residues.

This sequence belongs to the transferase hexapeptide repeat family.

The protein operates within amine and polyamine metabolism; carnitine metabolism. Overproduction of CaiE stimulates the activity of CaiB and CaiD. The polypeptide is Carnitine operon protein CaiE (Escherichia coli O157:H7).